Reading from the N-terminus, the 76-residue chain is ATP synthase subunit 9, mitochondrial (76 aa).

2 helical membrane-spanning segments follow: residues 14–34 (MATL…VALI) and 52–72 (ILGF…SFLL).

This sequence belongs to the ATPase C chain family. F-type ATPases have 2 components, CF(1) - the catalytic core - and CF(0) - the membrane proton channel. CF(1) has five subunits: alpha(3), beta(3), gamma(1), delta(1), epsilon(1). CF(0) has three main subunits: a, b and c.

Its subcellular location is the mitochondrion membrane. Functionally, mitochondrial membrane ATP synthase (F(1)F(0) ATP synthase or Complex V) produces ATP from ADP in the presence of a proton gradient across the membrane which is generated by electron transport complexes of the respiratory chain. F-type ATPases consist of two structural domains, F(1) - containing the extramembraneous catalytic core and F(0) - containing the membrane proton channel, linked together by a central stalk and a peripheral stalk. During catalysis, ATP synthesis in the catalytic domain of F(1) is coupled via a rotary mechanism of the central stalk subunits to proton translocation. Part of the complex F(0) domain. A homomeric c-ring of probably 10 subunits is part of the complex rotary element. The protein is ATP synthase subunit 9, mitochondrial (ATP9) of Debaryomyces hansenii (strain ATCC 36239 / CBS 767 / BCRC 21394 / JCM 1990 / NBRC 0083 / IGC 2968) (Yeast).